A 633-amino-acid chain; its full sequence is Basic helix-loop-helix ARNT-like protein 1 (633 aa).

The disordered stretch occupies residues 1-65 (MADQRMDISS…GMDTDKDDQH (65 aa)). Ser17 carries the phosphoserine; by GSK3-beta modification. The segment covering 24–33 (ISSSLSTSGV) has biased composition (polar residues). The Nuclear localization signal motif lies at 36–41 (NRKRKG). A bHLH domain is found at 79–132 (NAREAHSQIEKRRRDKMNSFIDELASLVPTCNAMSRKLDKLTVLRMAVQHMKTL). Ser85 is modified (phosphoserine). Ser97 is modified (phosphoserine; by CK2). The Nuclear export signal 1 motif lies at 149 to 159 (LSDDELKHLIL). In terms of domain architecture, PAS 1 spans 150-222 (SDDELKHLIL…EQLSSSDTAP (73 aa)). A Glycyl lysine isopeptide (Lys-Gly) (interchain with G-Cter in SUMO2 and SUMO3) cross-link involves residue Lys259. Lys266 is covalently cross-linked (Glycyl lysine isopeptide (Lys-Gly) (interchain with G-Cter in SUMO)). Residues 333 to 403 (PQPVNGEIRV…ECHRQVLQTR (71 aa)) enclose the PAS 2 domain. The short motif at 368 to 376 (LAYLPQELL) is the Nuclear export signal 2 element. Positions 408–451 (TNCYKFKIKDGSFITLRSRWFSFMNPWTKEVEYIVSTNTVVSTS) constitute a PAC domain. Disordered regions lie at residues 469–499 (SMDS…RAGA) and 518–578 (GSSP…DNSS). The span at 518 to 528 (GSSPSSCGSSP) shows a compositional bias: low complexity. At Lys545 the chain carries N6-acetyllysine. Positions 563-578 (GQIQDSSGYPYSDNSS) are enriched in polar residues.

Component of the circadian clock oscillator which includes the CRY1/2 proteins, CLOCK or NPAS2, BMAL1 or BMAL2, CSNK1D and/or CSNK1E, TIMELESS and the PER1/2/3 proteins. Forms a heterodimer with CLOCK. The CLOCK-BMAL1 heterodimer is required for E-box-dependent transactivation, for CLOCK nuclear translocation and degradation, and, for phosphorylation of both CLOCK and BMAL1. Interacts with PER1, PER2, CRY1 and CRY2 and this interaction requires a translocation to the nucleus. Interaction of the CLOCK-BMAL1 heterodimer with PER or CRY inhibits transcription activation. Interacts with NPAS2. In terms of processing, ubiquitinated, leading to its proteasomal degradation. Deubiquitinated by USP9X. O-glycosylated; contains O-GlcNAc. O-glycosylation by OGT prevents protein degradation by inhibiting ubiquitination. It also stabilizes the CLOCK-BMAL1 heterodimer thereby increasing CLOCK-BMAL1-mediated transcription of genes in the negative loop of the circadian clock such as PER1/2/3 and CRY1/2. Post-translationally, acetylated on Lys-545 by CLOCK during the repression phase of the circadian cycle. Acetylation facilitates recruitment of CRY1 protein and initiates the repression phase of the circadian cycle. Acetylated at Lys-545 by KAT5 during the activation phase of the cycle, leading to recruitment of the positive transcription elongation factor b (P-TEFb) and BRD4, followed by productive elongation of circadian transcripts. Deacetylated by SIRT1, which may result in decreased protein stability. In terms of processing, phosphorylated upon dimerization with CLOCK. Phosphorylation enhances the transcriptional activity, alters the subcellular localization and decreases the stability of the CLOCK-BMAL1 heterodimer by promoting its degradation. Phosphorylation shows circadian variations in the liver with a peak between CT10 to CT14. Phosphorylation at Ser-97 by CK2 is essential for its nuclear localization, its interaction with CLOCK and controls CLOCK nuclear entry. Dephosphorylation at Ser-85 is important for dimerization with CLOCK and transcriptional activity. Sumoylated on Lys-266 upon dimerization with CLOCK. Predominantly conjugated to poly-SUMO2/3 rather than SUMO1 and the level of these conjugates undergo rhythmic variation, peaking at CT9-CT12. Sumoylation localizes it exclusively to the PML body and promotes its ubiquitination in the PML body, ubiquitin-dependent proteasomal degradation and the transcriptional activity of the CLOCK-BMAL1 heterodimer. Post-translationally, undergoes lysosome-mediated degradation in a time-dependent manner in the liver. In terms of tissue distribution, expressed in pineal gland and retina.

Its subcellular location is the nucleus. The protein resides in the cytoplasm. It is found in the PML body. Its function is as follows. Transcriptional activator which forms a core component of the circadian clock. The circadian clock, an internal time-keeping system, regulates various physiological processes through the generation of approximately 24 hour circadian rhythms in gene expression, which are translated into rhythms in metabolism and behavior. It is derived from the Latin roots 'circa' (about) and 'diem' (day) and acts as an important regulator of a wide array of physiological functions including metabolism, sleep, body temperature, blood pressure, endocrine, immune, cardiovascular, and renal function. Consists of two major components: the central clock, residing in the suprachiasmatic nucleus (SCN) of the brain, and the peripheral clocks that are present in nearly every tissue and organ system. Both the central and peripheral clocks can be reset by environmental cues, also known as Zeitgebers (German for 'timegivers'). The predominant Zeitgeber for the central clock is light, which is sensed by retina and signals directly to the SCN. The central clock entrains the peripheral clocks through neuronal and hormonal signals, body temperature and feeding-related cues, aligning all clocks with the external light/dark cycle. Circadian rhythms allow an organism to achieve temporal homeostasis with its environment at the molecular level by regulating gene expression to create a peak of protein expression once every 24 hours to control when a particular physiological process is most active with respect to the solar day. Transcription and translation of core clock components (CLOCK, NPAS2, BMAL1, BMAL2, PER1, PER2, PER3, CRY1 and CRY2) plays a critical role in rhythm generation, whereas delays imposed by post-translational modifications (PTMs) are important for determining the period (tau) of the rhythms (tau refers to the period of a rhythm and is the length, in time, of one complete cycle). A diurnal rhythm is synchronized with the day/night cycle, while the ultradian and infradian rhythms have a period shorter and longer than 24 hours, respectively. Disruptions in the circadian rhythms contribute to the pathology of cardiovascular diseases, cancer, metabolic syndromes and aging. A transcription/translation feedback loop (TTFL) forms the core of the molecular circadian clock mechanism. Transcription factors, CLOCK or NPAS2 and BMAL1 or BMAL2, form the positive limb of the feedback loop, act in the form of a heterodimer and activate the transcription of core clock genes and clock-controlled genes (involved in key metabolic processes), harboring E-box elements (5'-CACGTG-3') within their promoters. The core clock genes: PER1/2/3 and CRY1/2 which are transcriptional repressors form the negative limb of the feedback loop and interact with the CLOCK|NPAS2-BMAL1|BMAL2 heterodimer inhibiting its activity and thereby negatively regulating their own expression. This heterodimer also activates nuclear receptors NR1D1/2 and RORA/B/G, which form a second feedback loop and which activate and repress BMAL1 transcription, respectively. The preferred binding motif for the CLOCK-BMAL1 heterodimer is 5'-CACGTGA-3', which contains a flanking adenine nucleotide at the 3-prime end of the canonical 6-nucleotide E-box sequence. CLOCK specifically binds to the half-site 5'-CAC-3', while BMAL1 binds to the half-site 5'-GTGA-3'. Essential for the rhythmic interaction of CLOCK with ASS1 and plays a critical role in positively regulating CLOCK-mediated acetylation of ASS1. Plays a role in protecting against lethal sepsis by limiting the expression of immune checkpoint protein CD274 in macrophages in a PKM2-dependent manner. The protein is Basic helix-loop-helix ARNT-like protein 1 (BMAL1) of Gallus gallus (Chicken).